Consider the following 396-residue polypeptide: ATP phosphoribosyltransferase regulatory subunit (396 aa).

It belongs to the class-II aminoacyl-tRNA synthetase family. HisZ subfamily. Heteromultimer composed of HisG and HisZ subunits.

Its subcellular location is the cytoplasm. It functions in the pathway amino-acid biosynthesis; L-histidine biosynthesis; L-histidine from 5-phospho-alpha-D-ribose 1-diphosphate: step 1/9. Required for the first step of histidine biosynthesis. May allow the feedback regulation of ATP phosphoribosyltransferase activity by histidine. This chain is ATP phosphoribosyltransferase regulatory subunit, found in Cellvibrio japonicus (strain Ueda107) (Pseudomonas fluorescens subsp. cellulosa).